The chain runs to 349 residues: Protein MULTIPLE CHLOROPLAST DIVISION SITE 1 (349 aa).

The transit peptide at 1–52 (MASIDSLQFHSLCNLQSSIGRAKLQNPSSLVIFRRRPVNLNWVQFETKGSFV) directs the protein to the chloroplast. Residues 53 to 116 (CKAIGDSSTP…VVFLMKKCSV (64 aa)) are Chloroplast intermembrane-facing. Residues 117-139 (NSIWIGVCITATVLVAAIRAYVV) traverse the membrane as a helical segment. Over 140 to 349 (RKSRDNQRAG…NSSSEETHKS (210 aa)) the chain is Stromal. The tract at residues 315–349 (QRPYKFSAKLEGENIQKNSQENHTGNSSSEETHKS) is disordered. Residues 329–343 (IQKNSQENHTGNSSS) are compositionally biased toward polar residues.

As to quaternary structure, interacts with MIND1. Interacts with ARC6 in the chloroplast stroma and binds to FtsZ2-1 in an ARC6-dependent manner.

Its subcellular location is the plastid. The protein resides in the chloroplast inner membrane. Required for chloroplast division. Together with MIND1 and ARC3, regulates FtsZ ring positioning in chloroplasts in an ARC6-dependent manner. Determines the site of chloroplast division in concert with MIND1. Not directly involved in ring formation, but required for MIND1 and MINE1 localization to regulate FtsZ ring formation during plastidial constriction. The protein is Protein MULTIPLE CHLOROPLAST DIVISION SITE 1 of Arabidopsis thaliana (Mouse-ear cress).